The following is a 155-amino-acid chain: Endoribonuclease YbeY (155 aa).

Residues His114, His118, and His124 each contribute to the Zn(2+) site.

The protein belongs to the endoribonuclease YbeY family. It depends on Zn(2+) as a cofactor.

The protein resides in the cytoplasm. Functionally, single strand-specific metallo-endoribonuclease involved in late-stage 70S ribosome quality control and in maturation of the 3' terminus of the 16S rRNA. The sequence is that of Endoribonuclease YbeY from Enterobacter sp. (strain 638).